A 317-amino-acid chain; its full sequence is Acetyl-coenzyme A carboxylase carboxyl transferase subunit alpha (317 aa).

Residues 39 to 293 (KLEDKNRKLT…KDALGASLER (255 aa)) form the CoA carboxyltransferase C-terminal domain.

This sequence belongs to the AccA family. In terms of assembly, acetyl-CoA carboxylase is a heterohexamer composed of biotin carboxyl carrier protein (AccB), biotin carboxylase (AccC) and two subunits each of ACCase subunit alpha (AccA) and ACCase subunit beta (AccD).

Its subcellular location is the cytoplasm. The enzyme catalyses N(6)-carboxybiotinyl-L-lysyl-[protein] + acetyl-CoA = N(6)-biotinyl-L-lysyl-[protein] + malonyl-CoA. The protein operates within lipid metabolism; malonyl-CoA biosynthesis; malonyl-CoA from acetyl-CoA: step 1/1. In terms of biological role, component of the acetyl coenzyme A carboxylase (ACC) complex. First, biotin carboxylase catalyzes the carboxylation of biotin on its carrier protein (BCCP) and then the CO(2) group is transferred by the carboxyltransferase to acetyl-CoA to form malonyl-CoA. This is Acetyl-coenzyme A carboxylase carboxyl transferase subunit alpha from Chromohalobacter salexigens (strain ATCC BAA-138 / DSM 3043 / CIP 106854 / NCIMB 13768 / 1H11).